Consider the following 919-residue polypeptide: DNA-directed RNA polymerase 132 kDa polypeptide (919 aa).

Belongs to the RNA polymerase beta chain family. As to quaternary structure, the DNA-dependent RNA polymerase used for intermediate and late genes expression consists of eight subunits (147) kDa, (133) kDa, (35) kDa, (30) kDa, (22) kDa, (19) kDa, (18) kDa and (7) kDa totalling more than 500 kDa in mass. The same holoenzyme, with the addition of the transcription-specificity factor RAP94, is used for early gene expression.

It is found in the virion. It catalyses the reaction RNA(n) + a ribonucleoside 5'-triphosphate = RNA(n+1) + diphosphate. Functionally, part of the DNA-dependent RNA polymerase which catalyzes the transcription of viral DNA into RNA using the four ribonucleoside triphosphates as substrates. Responsible for the transcription of early, intermediate and late genes. DNA-dependent RNA polymerase associates with the early transcription factor (ETF), itself composed of D6 and A7, thereby allowing the early genes transcription. Late transcription, and probably also intermediate transcription, require newly synthesized RNA polymerase. This Sheeppox virus (strain KS-1) (SPPV) protein is DNA-directed RNA polymerase 132 kDa polypeptide (RPO132).